The following is a 108-amino-acid chain: Cytochrome c (108 aa).

Positions 19, 22, 23, and 85 each coordinate heme c.

It belongs to the cytochrome c family. In terms of processing, binds 1 heme c group covalently per subunit.

The protein localises to the mitochondrion intermembrane space. Electron carrier protein. The oxidized form of the cytochrome c heme group can accept an electron from the heme group of the cytochrome c1 subunit of cytochrome reductase. Cytochrome c then transfers this electron to the cytochrome oxidase complex, the final protein carrier in the mitochondrial electron-transport chain. In Stellaria longipes (Longstalk starwort), this protein is Cytochrome c.